The primary structure comprises 816 residues: MYVVKRDGRQETVHFDKITARLKKLSYGLSSDHCDPVLVAQKVCAGVYKGVTTSQLDELAAETAAAMTCNHPDYASLAARIAVSNLHKNTKKSFSETIKDMFYHVNDRSGLKSPLIADDVFEIIMQNAARLDSEIIYDRDFEYDYFGFKTLERSYLLKVQGTVVERPQHMLMRVAVGIHKDDIDSVIQTYHLMSQRWFTHASPTLFNAGTPRPQLSSCFLVCMKDDSIEGIYETLKECAVISKSAGGIGVSVHNIRATGSYIRGTNGTSNGIVPMLRVFNDTARYVDQGGGKRKGAFAVYLEPWHADVYEFLELRKNHGKEEHRARDLFYALWLPDLFMERVQNNGQWSLFCPNEAPGLADCWGAEFETLYTKYEREGKAKKVVQAQQLWYEILTSQVETGTPYMLFKDSCNRKSNQQNLGTIKSSNLCTEIIEYTSPTETAVCNLASIALPRFVREKGVPLDSHPPKLAGSLDSKNRYFDFEKLAEVTATVTVNLNKIIDVNYYPVETAKTSNMRHRPIGIGVQGLADAFILLGMPFDSPEAQQLNKDIFETIYYHALKASTELAARLGPYETYAGSPVSKGILQPDMWNVIPSDRWDWAVLRDMISKNGVRNSLLVAPMPTASTSQILGNNECFEPYTSNIYSRRVLSGEFVVVNKHLLHDLTDMGLWTPTLKNKLINENGSIVNVAEIPDDLKAIYRTVWEIKQRTVVDMAADRGCYIDQSQSLNIHMDKPNFAKLTSLHFYTWKKGLKTGMYYLRSRAAADAIKFTVDTAMLKEKPSVAEGDKEVEEEDNETKLAQMVCSLTNPEECLACGS.

The region spanning Met1–Lys92 is the ATP-cone domain. ATP-binding positions include Lys5–Arg6, Glu11–Lys17, Thr53, and Asp57. Residues Ser202 and Ser217 each coordinate GDP. A disulfide bridge links Cys218 with Cys444. Residues Asp226–Ile228, Lys243, Arg256, and Arg263–Gly264 contribute to the dTTP site. Asn427 is a GDP binding site. The Proton acceptor role is filled by Asn427. Cys429 acts as the Cysteine radical intermediate in catalysis. GDP contacts are provided by residues Glu431 and Thr623–Thr626. The active-site Proton acceptor is the Glu431.

It belongs to the ribonucleoside diphosphate reductase large chain family. Heterotetramer of two large/R1 and two small/R2 subunits. A radical transfer pathway may occur between 'Tyr-125' of protein R2 and R1. In terms of processing, contains a disulfide bonds. Binding of the substrate occurs primarily when the active-site cysteines are reduced. Highly expressed in actively growing tissues such as young leaves, shoot apices, inflorescences and carpels. Very low expression in cotyledons, adult and cauline leaves and senescent leaves.

It is found in the cytoplasm. It catalyses the reaction a 2'-deoxyribonucleoside 5'-diphosphate + [thioredoxin]-disulfide + H2O = a ribonucleoside 5'-diphosphate + [thioredoxin]-dithiol. Under complex allosteric control mediated by deoxynucleoside triphosphates and ATP binding to separate specificity and activation sites on the large subunit. The type of nucleotide bound at the specificity site determines substrate preference. It seems probable that ATP makes the enzyme reduce CDP and UDP, dGTP favors ADP reduction and dTTP favors GDP reduction. Stimulated by ATP and inhibited by dATP binding to the activity site. Its function is as follows. Provides the precursors necessary for DNA synthesis. Catalyzes the biosynthesis of deoxyribonucleotides from the corresponding ribonucleotides. R1 contains the binding sites for both substrates and allosteric effectors and carries out the actual reduction of the ribonucleotide. Ribonucleotide reductase (RNR) complex function is essential for efficient organellar DNA degradation in pollen. Involved in chloroplast division. This chain is Ribonucleoside-diphosphate reductase large subunit, found in Arabidopsis thaliana (Mouse-ear cress).